Reading from the N-terminus, the 224-residue chain is tRNA (guanine-N(7)-)-methyltransferase (224 aa).

Residues Glu-57, Asp-82, and Asp-109 each contribute to the S-adenosyl-L-methionine site. Residue Asp-167 coordinates substrate.

The protein belongs to the class I-like SAM-binding methyltransferase superfamily. TrmB family.

The enzyme catalyses guanosine(46) in tRNA + S-adenosyl-L-methionine = N(7)-methylguanosine(46) in tRNA + S-adenosyl-L-homocysteine. It functions in the pathway tRNA modification; N(7)-methylguanine-tRNA biosynthesis. In terms of biological role, catalyzes the formation of N(7)-methylguanine at position 46 (m7G46) in tRNA. The chain is tRNA (guanine-N(7)-)-methyltransferase from Chloroflexus aurantiacus (strain ATCC 29366 / DSM 635 / J-10-fl).